Reading from the N-terminus, the 200-residue chain is Large ribosomal subunit protein bL25 (200 aa).

The protein belongs to the bacterial ribosomal protein bL25 family. CTC subfamily. In terms of assembly, part of the 50S ribosomal subunit; part of the 5S rRNA/L5/L18/L25 subcomplex. Contacts the 5S rRNA. Binds to the 5S rRNA independently of L5 and L18.

This is one of the proteins that binds to the 5S RNA in the ribosome where it forms part of the central protuberance. This Corynebacterium glutamicum (strain ATCC 13032 / DSM 20300 / JCM 1318 / BCRC 11384 / CCUG 27702 / LMG 3730 / NBRC 12168 / NCIMB 10025 / NRRL B-2784 / 534) protein is Large ribosomal subunit protein bL25.